The primary structure comprises 294 residues: uncharacterized protein (294 aa).

A disordered region spans residues 1-215; sequence MTTAITPDKK…DQDDDDQKDL (215 aa). Composition is skewed to basic residues over residues 27–43 and 50–78; these read TKPR…KSKK and AKKR…KKAP. Low complexity predominate over residues 79–88; the sequence is MKAPSKPAAK. Residues 92–102 show a composition bias toward polar residues; it reads QQAQASLQKPI. Over residues 118–136 the composition is skewed to pro residues; the sequence is PRPPTPIPPTGVKPEPAPR. The span at 145–160 shows a compositional bias: low complexity; the sequence is SVSSTTPRTSATTGTT.

This is an uncharacterized protein from Caenorhabditis elegans.